Consider the following 172-residue polypeptide: Adenine phosphoribosyltransferase (172 aa).

Belongs to the purine/pyrimidine phosphoribosyltransferase family. As to quaternary structure, homodimer.

It localises to the cytoplasm. It carries out the reaction AMP + diphosphate = 5-phospho-alpha-D-ribose 1-diphosphate + adenine. Its pathway is purine metabolism; AMP biosynthesis via salvage pathway; AMP from adenine: step 1/1. Functionally, catalyzes a salvage reaction resulting in the formation of AMP, that is energically less costly than de novo synthesis. This Streptococcus mutans serotype c (strain ATCC 700610 / UA159) protein is Adenine phosphoribosyltransferase.